The following is a 530-amino-acid chain: MSISNMTSTVWPDLQVPAIEHNHLPILTVALLTGIASAVYINVSSVQDPCKVGSIPTVKRPRLLDAYRSGVWWRIFVPRLVPYIEEGYHKYNKNDQPFRIWLGGFQAYAYVLPERYLDKIKNMPESEASFAAMANKYFHTGLPTGEVNNLVLQVASKLVNGNLATIKTLMQGEVQKALAREIGSPRQWTKINAWQVARKTTEAPGLRVVFGEELANDKTFVTGVSEFVSNITVYAFTLRYINLGPLRDFILYLVHWRHRRSLPAVLTPLNNVITERKKVRSNRHISDDEESFDCIQWALDQPVSDDCKTAEAIARRLVVISLGTIDTVAGVLVKQLTHLASHPECHEEIRAEIRECLAEDDNGWTLKSTGRMKKLESFIQESLRMSSGAISLSGMRIVTGSGFRLDDNTVLPRDSFIAIPTRNILYDPEVFPEPEKFDPFRFYKIKEDEKNAGSRSNRRDIRASWLAFGYGRQACPGRFYAINAMKTILGEILLKYDIRLAEKQAPRIDIDLDPMLAPVRSTDLEFRVRA.

N5 carries an N-linked (GlcNAc...) asparagine glycan. A helical transmembrane segment spans residues 24-44; that stretch reads LPILTVALLTGIASAVYINVS. N230 carries N-linked (GlcNAc...) asparagine glycosylation.

This sequence belongs to the cytochrome P450 family. Requires heme as cofactor.

The protein resides in the membrane. It catalyses the reaction preaspterpenacid acid I + reduced [NADPH--hemoprotein reductase] + O2 = preaspterpenacid acid II + oxidized [NADPH--hemoprotein reductase] + H2O + H(+). It functions in the pathway secondary metabolite biosynthesis; terpenoid biosynthesis. Its function is as follows. Cytochrome P450 monooxygenase; part of the gene cluster that mediates the biosynthesis of aspterpenacids. Performs the C22-oxidative modification of the terpene synthase sttA product preaspterpenacid I to produce preaspterpenacid II. It has still to be determined how preaspterpenacid II is further modified to produce aspterpenacids. This chain is Cytochrome P450 monooxygenase sttB, found in Aspergillus terreus (strain NIH 2624 / FGSC A1156).